The primary structure comprises 337 residues: Glucan endo-1,3-beta-glucosidase, basic isoform 1 (337 aa).

E94 functions as the Proton donor in the catalytic mechanism. The Nucleophile role is filled by E239. Positions 315-337 (VSERVWDISAETNSTASSLISEM) are cleaved as a propeptide — removed in mature form. N-linked (GlcNAc...) asparagine glycosylation occurs at N327.

It belongs to the glycosyl hydrolase 17 family.

The protein resides in the vacuole. It catalyses the reaction Hydrolysis of (1-&gt;3)-beta-D-glucosidic linkages in (1-&gt;3)-beta-D-glucans.. Its function is as follows. Is thought to be an important plant defense-related product against fungal pathogens. The polypeptide is Glucan endo-1,3-beta-glucosidase, basic isoform 1 (GLUB1) (Solanum tuberosum (Potato)).